We begin with the raw amino-acid sequence, 571 residues long: Sulfite reductase [NADPH] hemoprotein beta-component (571 aa).

Cysteine 436, cysteine 442, cysteine 481, and cysteine 485 together coordinate [4Fe-4S] cluster. A siroheme-binding site is contributed by cysteine 485.

This sequence belongs to the nitrite and sulfite reductase 4Fe-4S domain family. As to quaternary structure, alpha(8)-beta(8). The alpha component is a flavoprotein, the beta component is a hemoprotein. It depends on siroheme as a cofactor. [4Fe-4S] cluster serves as cofactor.

It carries out the reaction hydrogen sulfide + 3 NADP(+) + 3 H2O = sulfite + 3 NADPH + 4 H(+). Its pathway is sulfur metabolism; hydrogen sulfide biosynthesis; hydrogen sulfide from sulfite (NADPH route): step 1/1. Its function is as follows. Component of the sulfite reductase complex that catalyzes the 6-electron reduction of sulfite to sulfide. This is one of several activities required for the biosynthesis of L-cysteine from sulfate. This Bacillus subtilis (strain 168) protein is Sulfite reductase [NADPH] hemoprotein beta-component (cysI).